The sequence spans 156 residues: MVRRFKRAVKYRRGSRTHGWGRVGQHRKSGGSGGKGMVGFHKHKWSLVMKYGESGTGWPFYGKHGFKQPQAISIEWRPINVGTLAEVVRGLKREGRVKEEGGRYVVNLVELGFNKLLGGGDVDLPIVVYTPAASRSAVEKIEKAGGEVRIVPAVHR.

Over residues 1–16 (MVRRFKRAVKYRRGSR) the composition is skewed to basic residues. The tract at residues 1–35 (MVRRFKRAVKYRRGSRTHGWGRVGQHRKSGGSGGK) is disordered.

It belongs to the universal ribosomal protein uL15 family. As to quaternary structure, part of the 50S ribosomal subunit.

Its function is as follows. Binds to the 23S rRNA. This is Large ribosomal subunit protein uL15 from Pyrobaculum neutrophilum (strain DSM 2338 / JCM 9278 / NBRC 100436 / V24Sta) (Thermoproteus neutrophilus).